Reading from the N-terminus, the 801-residue chain is Elongation factor G, mitochondrial (801 aa).

The N-terminal 65 residues, 1–65, are a transit peptide targeting the mitochondrion; the sequence is MRVQSLLRAQ…QKIQNQRRWQ (65 aa). A tr-type G domain is found at 100-387; that stretch reads SRVRNIGIAA…AVCDYLPNPS (288 aa). GTP contacts are provided by residues 109–116, 185–189, and 239–242; these read AHIDSGKT, DTPGH, and NKMD.

Belongs to the TRAFAC class translation factor GTPase superfamily. Classic translation factor GTPase family. EF-G/EF-2 subfamily.

Its subcellular location is the mitochondrion. The protein operates within protein biosynthesis; polypeptide chain elongation. Mitochondrial GTPase that catalyzes the GTP-dependent ribosomal translocation step during translation elongation. During this step, the ribosome changes from the pre-translocational (PRE) to the post-translocational (POST) state as the newly formed A-site-bound peptidyl-tRNA and P-site-bound deacylated tRNA move to the P and E sites, respectively. Catalyzes the coordinated movement of the two tRNA molecules, the mRNA and conformational changes in the ribosome. This chain is Elongation factor G, mitochondrial (mef1), found in Pyrenophora tritici-repentis (strain Pt-1C-BFP) (Wheat tan spot fungus).